Reading from the N-terminus, the 477-residue chain is Bifunctional protein HldE (477 aa).

Positions 1–318 (MKVTLPEFER…ENAVRGRADT (318 aa)) are ribokinase. The residue at position 179 (lysine 179) is an N6-acetyllysine. Residue 195-198 (NLSE) participates in ATP binding. The active site involves aspartate 264. Residues 344–477 (MTNGVFDILH…IKKIQQDKKG (134 aa)) are cytidylyltransferase.

This sequence in the N-terminal section; belongs to the carbohydrate kinase PfkB family. It in the C-terminal section; belongs to the cytidylyltransferase family. As to quaternary structure, homodimer.

It carries out the reaction D-glycero-beta-D-manno-heptose 7-phosphate + ATP = D-glycero-beta-D-manno-heptose 1,7-bisphosphate + ADP + H(+). The catalysed reaction is D-glycero-beta-D-manno-heptose 1-phosphate + ATP + H(+) = ADP-D-glycero-beta-D-manno-heptose + diphosphate. It participates in nucleotide-sugar biosynthesis; ADP-L-glycero-beta-D-manno-heptose biosynthesis; ADP-L-glycero-beta-D-manno-heptose from D-glycero-beta-D-manno-heptose 7-phosphate: step 1/4. The protein operates within nucleotide-sugar biosynthesis; ADP-L-glycero-beta-D-manno-heptose biosynthesis; ADP-L-glycero-beta-D-manno-heptose from D-glycero-beta-D-manno-heptose 7-phosphate: step 3/4. Functionally, catalyzes the phosphorylation of D-glycero-D-manno-heptose 7-phosphate at the C-1 position to selectively form D-glycero-beta-D-manno-heptose-1,7-bisphosphate. Catalyzes the ADP transfer from ATP to D-glycero-beta-D-manno-heptose 1-phosphate, yielding ADP-D-glycero-beta-D-manno-heptose. This chain is Bifunctional protein HldE, found in Shigella flexneri serotype 5b (strain 8401).